Consider the following 416-residue polypeptide: Multifunctional CCA protein (416 aa).

2 residues coordinate ATP: Gly8 and Arg11. CTP contacts are provided by Gly8 and Arg11. Mg(2+)-binding residues include Asp21 and Asp23. Residues Arg91, Arg137, and Arg140 each contribute to the ATP site. Residues Arg91, Arg137, and Arg140 each contribute to the CTP site. The region spanning 228–329 (TGVHTLMVLA…VKIFDKADFW (102 aa)) is the HD domain.

Belongs to the tRNA nucleotidyltransferase/poly(A) polymerase family. Bacterial CCA-adding enzyme type 1 subfamily. As to quaternary structure, monomer. Can also form homodimers and oligomers. The cofactor is Mg(2+). Ni(2+) is required as a cofactor.

The enzyme catalyses a tRNA precursor + 2 CTP + ATP = a tRNA with a 3' CCA end + 3 diphosphate. It catalyses the reaction a tRNA with a 3' CCA end + 2 CTP + ATP = a tRNA with a 3' CCACCA end + 3 diphosphate. Its function is as follows. Catalyzes the addition and repair of the essential 3'-terminal CCA sequence in tRNAs without using a nucleic acid template. Adds these three nucleotides in the order of C, C, and A to the tRNA nucleotide-73, using CTP and ATP as substrates and producing inorganic pyrophosphate. tRNA 3'-terminal CCA addition is required both for tRNA processing and repair. Also involved in tRNA surveillance by mediating tandem CCA addition to generate a CCACCA at the 3' terminus of unstable tRNAs. While stable tRNAs receive only 3'-terminal CCA, unstable tRNAs are marked with CCACCA and rapidly degraded. This Shewanella baltica (strain OS155 / ATCC BAA-1091) protein is Multifunctional CCA protein.